Reading from the N-terminus, the 479-residue chain is Fibrinogen beta chain (479 aa).

Positions 1–18 (MRHLWLLLLSVSLVQTQA) are cleaved as a signal peptide. Residues 20–82 (TTDSDKVDLS…VERKPPDAGG (63 aa)) form a disordered region. Residues 33-35 (GHR) form a beta-chain polymerization, binding distal domain of another fibrin region. Composition is skewed to basic and acidic residues over residues 35-45 (RPVDRRKEEPP) and 64-78 (AKVD…RKPP). Cystine bridges form between cysteine 219–cysteine 304 and cysteine 229–cysteine 258. The 257-residue stretch at 220-476 (NIPVVSGKEC…RMSMKIRPVF (257 aa)) folds into the Fibrinogen C-terminal domain. The N-linked (GlcNAc...) asparagine glycan is linked to asparagine 382. Cysteine 412 and cysteine 425 are disulfide-bonded.

Heterohexamer; disulfide linked. Contains 2 sets of 3 non-identical chains (alpha, beta and gamma). The 2 heterotrimers are in head to head conformation with the N-termini in a small central domain. Post-translationally, conversion of fibrinogen to fibrin is triggered by thrombin, which cleaves fibrinopeptides A and B from alpha and beta chains, and thus exposes the N-terminal polymerization sites responsible for the formation of the soft clot.

It localises to the secreted. Functionally, cleaved by the protease thrombin to yield monomers which, together with fibrinogen alpha (FGA) and fibrinogen gamma (FGG), polymerize to form an insoluble fibrin matrix. Fibrin has a major function in hemostasis as one of the primary components of blood clots. In addition, functions during the early stages of wound repair to stabilize the lesion and guide cell migration during re-epithelialization. Was originally thought to be essential for platelet aggregation, based on in vitro studies using anticoagulated blood. However subsequent studies have shown that it is not absolutely required for thrombus formation in vivo. Enhances expression of SELP in activated platelets. Maternal fibrinogen is essential for successful pregnancy. Fibrin deposition is also associated with infection, where it protects against IFNG-mediated hemorrhage. May also facilitate the antibacterial immune response via both innate and T-cell mediated pathways. The chain is Fibrinogen beta chain (Fgb) from Rattus norvegicus (Rat).